The following is a 766-amino-acid chain: Protein transport protein Sec23B (766 aa).

N-acetylalanine is present on Ala2. The Zn(2+) site is built by Cys61, Cys66, Cys85, and Cys88. At Lys564 the chain carries N6-acetyllysine. The Gelsolin-like repeat unit spans residues 633-719; the sequence is PEPVLLDSSS…EHGGSQARFL (87 aa).

Belongs to the SEC23/SEC24 family. SEC23 subfamily. COPII is composed of at least five proteins: the Sec23/24 complex, the Sec13/31 complex and Sar1. Interacts with SAR1A.

It is found in the cytoplasmic vesicle. The protein localises to the COPII-coated vesicle membrane. It localises to the endoplasmic reticulum membrane. The protein resides in the cytoplasm. Its subcellular location is the cytosol. Component of the coat protein complex II (COPII) which promotes the formation of transport vesicles from the endoplasmic reticulum (ER). The coat has two main functions, the physical deformation of the endoplasmic reticulum membrane into vesicles and the selection of cargo molecules for their transport to the Golgi complex. The protein is Protein transport protein Sec23B of Pongo abelii (Sumatran orangutan).